Here is a 196-residue protein sequence, read N- to C-terminus: Imidazole glycerol phosphate synthase subunit HisH (196 aa).

In terms of domain architecture, Glutamine amidotransferase type-1 spans 2 to 196 (KVAVVKYNAG…ERVLRNFLDL (195 aa)). Cys77 serves as the catalytic Nucleophile. Catalysis depends on residues His178 and Glu180.

In terms of assembly, heterodimer of HisH and HisF.

Its subcellular location is the cytoplasm. It catalyses the reaction 5-[(5-phospho-1-deoxy-D-ribulos-1-ylimino)methylamino]-1-(5-phospho-beta-D-ribosyl)imidazole-4-carboxamide + L-glutamine = D-erythro-1-(imidazol-4-yl)glycerol 3-phosphate + 5-amino-1-(5-phospho-beta-D-ribosyl)imidazole-4-carboxamide + L-glutamate + H(+). It carries out the reaction L-glutamine + H2O = L-glutamate + NH4(+). It participates in amino-acid biosynthesis; L-histidine biosynthesis; L-histidine from 5-phospho-alpha-D-ribose 1-diphosphate: step 5/9. Functionally, IGPS catalyzes the conversion of PRFAR and glutamine to IGP, AICAR and glutamate. The HisH subunit catalyzes the hydrolysis of glutamine to glutamate and ammonia as part of the synthesis of IGP and AICAR. The resulting ammonia molecule is channeled to the active site of HisF. This Bacteroides thetaiotaomicron (strain ATCC 29148 / DSM 2079 / JCM 5827 / CCUG 10774 / NCTC 10582 / VPI-5482 / E50) protein is Imidazole glycerol phosphate synthase subunit HisH.